A 309-amino-acid polypeptide reads, in one-letter code: GalNAc(5)-diNAcBac-PP-undecaprenol beta-1,3-glucosyltransferase (309 aa).

A helical membrane pass occupies residues 273–291; sequence SLSIKINAPALILLILSII.

The protein belongs to the glycosyltransferase 2 family.

It localises to the membrane. It carries out the reaction [alpha-D-GalNAc-(1-&gt;4)]4-alpha-D-GalNAc-(1-&gt;3)-alpha-D-diNAcBac-tri-trans,hepta-cis-undecaprenyl diphosphate + UDP-alpha-D-glucose = [alpha-D-GalNAc-(1-&gt;4)]2-[beta-D-Glc-(1-&gt;3)]-[alpha-D-GalNAc-(1-&gt;4)]2-alpha-D-GalNAc-(1-&gt;3)-alpha-D-diNAcBac-tri-trans,hepta-cis-undecaprenyl diphosphate + UDP + H(+). It participates in protein modification; protein glycosylation. Functionally, glucosyltransferase that adds he final branching glucose to complete the final heptasaccharide structure in the N-linked protein glycosylation pathway. This chain is GalNAc(5)-diNAcBac-PP-undecaprenol beta-1,3-glucosyltransferase (pglI), found in Campylobacter jejuni subsp. jejuni serotype O:2 (strain ATCC 700819 / NCTC 11168).